The primary structure comprises 508 residues: UDP-N-acetylmuramoylalanine--D-glutamate ligase (508 aa).

ATP is bound at residue 138–144 (GTNGKTT).

The protein belongs to the MurCDEF family.

The protein localises to the cytoplasm. It carries out the reaction UDP-N-acetyl-alpha-D-muramoyl-L-alanine + D-glutamate + ATP = UDP-N-acetyl-alpha-D-muramoyl-L-alanyl-D-glutamate + ADP + phosphate + H(+). It participates in cell wall biogenesis; peptidoglycan biosynthesis. Cell wall formation. Catalyzes the addition of glutamate to the nucleotide precursor UDP-N-acetylmuramoyl-L-alanine (UMA). The protein is UDP-N-acetylmuramoylalanine--D-glutamate ligase of Bordetella avium (strain 197N).